The primary structure comprises 535 residues: Protein PyrBI (535 aa).

Residues 1–341 (MENKFMGRSL…MIAGKIGDDY (341 aa)) form an aspartate carbamoyltransferase region. The linker stretch occupies residues 342 to 370 (KGPEPKSCERVEDEDYIVEVPINNSKESK). Residues 371–535 (VETFSEGVRP…FKEIWGEKKN (165 aa)) are aspartate carbamoyltransferase regulatory region. 4 residues coordinate Zn(2+): Cys488, Cys493, Cys517, and Cys520.

This sequence in the N-terminal section; belongs to the aspartate/ornithine carbamoyltransferase superfamily. ATCase family. It in the C-terminal section; belongs to the PyrI family.

It catalyses the reaction carbamoyl phosphate + L-aspartate = N-carbamoyl-L-aspartate + phosphate + H(+). It participates in pyrimidine metabolism; UMP biosynthesis via de novo pathway; (S)-dihydroorotate from bicarbonate: step 2/3. This Treponema denticola (strain ATCC 35405 / DSM 14222 / CIP 103919 / JCM 8153 / KCTC 15104) protein is Protein PyrBI (pyrBI).